The sequence spans 415 residues: 3-isopropylmalate dehydratase large subunit (415 aa).

[4Fe-4S] cluster-binding residues include C297, C355, and C358.

It belongs to the aconitase/IPM isomerase family. LeuC type 2 subfamily. In terms of assembly, heterodimer of LeuC and LeuD. Requires [4Fe-4S] cluster as cofactor.

It catalyses the reaction (2R,3S)-3-isopropylmalate = (2S)-2-isopropylmalate. It participates in amino-acid biosynthesis; L-leucine biosynthesis; L-leucine from 3-methyl-2-oxobutanoate: step 2/4. Functionally, catalyzes the isomerization between 2-isopropylmalate and 3-isopropylmalate, via the formation of 2-isopropylmaleate. The chain is 3-isopropylmalate dehydratase large subunit from Sulfurisphaera tokodaii (strain DSM 16993 / JCM 10545 / NBRC 100140 / 7) (Sulfolobus tokodaii).